A 209-amino-acid polypeptide reads, in one-letter code: Kynurenine formamidase (209 aa).

Residue Trp-18 participates in substrate binding. Zn(2+) contacts are provided by His-48, His-52, and Asp-54. His-58 serves as the catalytic Proton donor/acceptor. Positions 160 and 172 each coordinate Zn(2+).

It belongs to the Cyclase 1 superfamily. KynB family. In terms of assembly, homodimer. The cofactor is Zn(2+).

The enzyme catalyses N-formyl-L-kynurenine + H2O = L-kynurenine + formate + H(+). It participates in amino-acid degradation; L-tryptophan degradation via kynurenine pathway; L-kynurenine from L-tryptophan: step 2/2. Catalyzes the hydrolysis of N-formyl-L-kynurenine to L-kynurenine, the second step in the kynurenine pathway of tryptophan degradation. The protein is Kynurenine formamidase of Paraburkholderia phymatum (strain DSM 17167 / CIP 108236 / LMG 21445 / STM815) (Burkholderia phymatum).